Consider the following 964-residue polypeptide: Chaperone protein ClpB4, mitochondrial (964 aa).

Residues 1 to 39 (MALRRLSKSVSSAIKAQYTLSRPSPLLRSRSLSSSPHYT) constitute a mitochondrion transit peptide. Positions 83 to 227 (VNQNEFTEMA…KDAIKDVRGD (145 aa)) constitute a Clp R domain. Repeat stretches follow at residues 88 to 153 (FTEM…ISKQ) and 164 to 227 (LGSS…VRGD). The interval 242 to 490 (LEKYGNDLTE…KLKMEITSKP (249 aa)) is i. ATP contacts are provided by residues 287–294 (GEPGVGKT) and 690–697 (GPTGVGKT). The tract at residues 616–807 (VTDLDIAEIV…VVIMTSNIGS (192 aa)) is II.

It belongs to the ClpA/ClpB family.

It localises to the mitochondrion. Functionally, molecular chaperone that does not seem to be involved in heat stress response or tolerance. The polypeptide is Chaperone protein ClpB4, mitochondrial (CLPB4) (Arabidopsis thaliana (Mouse-ear cress)).